The following is a 310-amino-acid chain: Protein DOS2 (310 aa).

2 stretches are compositionally biased toward basic and acidic residues: residues 15 to 26 (DKISNSHTKETG) and 135 to 146 (SNDKDENSKENE). Disordered stretches follow at residues 15-45 (DKIS…KTNE) and 131-151 (AEND…AVGG). In terms of domain architecture, BSD spans 176 to 228 (QLDPFDVDEKTEEICSILQGDKDISKLMNDIVPHKISYKDFWHIYFLQRNKIL). A disordered region spans residues 240-310 (KKEKETEEKE…KDDDDDDDWE (71 aa)). Residues 247–263 (EKEVEWDDEEEEEDDDK) show a composition bias toward acidic residues. Basic and acidic residues-rich tracts occupy residues 264 to 276 (VEAV…KGET) and 284 to 300 (GLKD…KDES). Positions 301 to 310 (KDDDDDDDWE) are enriched in acidic residues.

Its function is as follows. Acts in ubiquitin metabolism and is necessary for the control of single-copy DNA replication. In Saccharomyces cerevisiae (strain ATCC 204508 / S288c) (Baker's yeast), this protein is Protein DOS2 (DOS2).